The primary structure comprises 261 residues: 4-hydroxy-tetrahydrodipicolinate reductase (261 aa).

9–14 provides a ligand contact to NAD(+); that stretch reads GCLGRM. Arg-36 is a binding site for NADP(+). Residues 97 to 99 and 118 to 121 contribute to the NAD(+) site; these read GTT and SANM. Residue His-151 is the Proton donor/acceptor of the active site. Residue His-152 participates in (S)-2,3,4,5-tetrahydrodipicolinate binding. Lys-155 functions as the Proton donor in the catalytic mechanism. 161–162 contacts (S)-2,3,4,5-tetrahydrodipicolinate; it reads GT.

Belongs to the DapB family.

Its subcellular location is the cytoplasm. The catalysed reaction is (S)-2,3,4,5-tetrahydrodipicolinate + NAD(+) + H2O = (2S,4S)-4-hydroxy-2,3,4,5-tetrahydrodipicolinate + NADH + H(+). It catalyses the reaction (S)-2,3,4,5-tetrahydrodipicolinate + NADP(+) + H2O = (2S,4S)-4-hydroxy-2,3,4,5-tetrahydrodipicolinate + NADPH + H(+). It participates in amino-acid biosynthesis; L-lysine biosynthesis via DAP pathway; (S)-tetrahydrodipicolinate from L-aspartate: step 4/4. Catalyzes the conversion of 4-hydroxy-tetrahydrodipicolinate (HTPA) to tetrahydrodipicolinate. The sequence is that of 4-hydroxy-tetrahydrodipicolinate reductase from Wolbachia pipientis wMel.